We begin with the raw amino-acid sequence, 494 residues long: Serine carboxypeptidase-like 21 (494 aa).

The first 23 residues, 1 to 23, serve as a signal peptide directing secretion; it reads MGRLVEAIIASILLSLCFTITKS. N-linked (GlcNAc...) asparagine glycosylation is found at Asn-37 and Asn-69. 3 disulfide bridges follow: Cys-85–Cys-383, Cys-247–Cys-263, and Cys-286–Cys-350. The active site involves Ser-179. Asn-198 and Asn-248 each carry an N-linked (GlcNAc...) asparagine glycan. N-linked (GlcNAc...) asparagine glycosylation occurs at Asn-402. The active site involves Asp-418. N-linked (GlcNAc...) asparagine glycosylation occurs at Asn-460. His-471 is an active-site residue.

The protein belongs to the peptidase S10 family. In terms of tissue distribution, expressed in flowers and siliques.

It is found in the secreted. Functionally, probable carboxypeptidase. The polypeptide is Serine carboxypeptidase-like 21 (SCPL21) (Arabidopsis thaliana (Mouse-ear cress)).